The sequence spans 680 residues: DNA ligase (680 aa).

Residues 38-42 (DAEYD), 87-88 (SL), and glutamate 119 each bind NAD(+). The active-site N6-AMP-lysine intermediate is the lysine 121. Residues arginine 142, glutamate 179, lysine 296, and lysine 320 each contribute to the NAD(+) site. The Zn(2+) site is built by cysteine 414, cysteine 417, cysteine 432, and cysteine 438. Positions 597-680 (IEDLPLKGLT…DLLRKHGRLE (84 aa)) constitute a BRCT domain.

The protein belongs to the NAD-dependent DNA ligase family. LigA subfamily. Mg(2+) serves as cofactor. Requires Mn(2+) as cofactor.

The enzyme catalyses NAD(+) + (deoxyribonucleotide)n-3'-hydroxyl + 5'-phospho-(deoxyribonucleotide)m = (deoxyribonucleotide)n+m + AMP + beta-nicotinamide D-nucleotide.. DNA ligase that catalyzes the formation of phosphodiester linkages between 5'-phosphoryl and 3'-hydroxyl groups in double-stranded DNA using NAD as a coenzyme and as the energy source for the reaction. It is essential for DNA replication and repair of damaged DNA. This chain is DNA ligase, found in Cellvibrio japonicus (strain Ueda107) (Pseudomonas fluorescens subsp. cellulosa).